A 288-amino-acid chain; its full sequence is ATP phosphoribosyltransferase (288 aa).

It belongs to the ATP phosphoribosyltransferase family. Long subfamily. Mg(2+) is required as a cofactor.

The protein resides in the cytoplasm. The enzyme catalyses 1-(5-phospho-beta-D-ribosyl)-ATP + diphosphate = 5-phospho-alpha-D-ribose 1-diphosphate + ATP. It functions in the pathway amino-acid biosynthesis; L-histidine biosynthesis; L-histidine from 5-phospho-alpha-D-ribose 1-diphosphate: step 1/9. Feedback inhibited by histidine. Catalyzes the condensation of ATP and 5-phosphoribose 1-diphosphate to form N'-(5'-phosphoribosyl)-ATP (PR-ATP). Has a crucial role in the pathway because the rate of histidine biosynthesis seems to be controlled primarily by regulation of HisG enzymatic activity. This Methanocaldococcus jannaschii (strain ATCC 43067 / DSM 2661 / JAL-1 / JCM 10045 / NBRC 100440) (Methanococcus jannaschii) protein is ATP phosphoribosyltransferase (hisG).